The chain runs to 41 residues: Cytochrome b559 subunit beta (41 aa).

A helical membrane pass occupies residues 16–32; that stretch reads WLAVHALAVPTVFFLGA. Histidine 20 lines the heme pocket.

The protein belongs to the PsbE/PsbF family. As to quaternary structure, heterodimer of an alpha subunit and a beta subunit. PSII is composed of 1 copy each of membrane proteins PsbA, PsbB, PsbC, PsbD, PsbE, PsbF, PsbH, PsbI, PsbJ, PsbK, PsbL, PsbM, PsbT, PsbX, PsbY, PsbZ, Psb30/Ycf12, at least 3 peripheral proteins of the oxygen-evolving complex and a large number of cofactors. It forms dimeric complexes. Heme b is required as a cofactor.

It localises to the plastid. It is found in the chloroplast thylakoid membrane. This b-type cytochrome is tightly associated with the reaction center of photosystem II (PSII). PSII is a light-driven water:plastoquinone oxidoreductase that uses light energy to abstract electrons from H(2)O, generating O(2) and a proton gradient subsequently used for ATP formation. It consists of a core antenna complex that captures photons, and an electron transfer chain that converts photonic excitation into a charge separation. In Chlorella vulgaris (Green alga), this protein is Cytochrome b559 subunit beta.